We begin with the raw amino-acid sequence, 336 residues long: Adenosine deaminase (336 aa).

Zn(2+) is bound by residues H15 and H17. 3 residues coordinate substrate: H17, D19, and G172. Zn(2+) is bound at residue H199. Residue E202 is the Proton donor of the active site. Zn(2+) is bound at residue D279.

The protein belongs to the metallo-dependent hydrolases superfamily. Adenosine and AMP deaminases family. Adenosine deaminase subfamily. Zn(2+) serves as cofactor.

It catalyses the reaction adenosine + H2O + H(+) = inosine + NH4(+). The catalysed reaction is 2'-deoxyadenosine + H2O + H(+) = 2'-deoxyinosine + NH4(+). Functionally, catalyzes the hydrolytic deamination of adenosine and 2-deoxyadenosine. The polypeptide is Adenosine deaminase (Streptococcus thermophilus (strain ATCC BAA-250 / LMG 18311)).